The chain runs to 248 residues: Protein G1-like6 (248 aa).

Positions 1-15 (MDRHHHHHHHHHHHM) are enriched in basic residues. Disordered regions lie at residues 1–35 (MDRH…GATQ), 50–84 (GAGS…YESQ), and 198–248 (ARGI…FIIP). Positions 17–32 (SGGGQDPAAGDGGAGG) are enriched in gly residues. The segment covering 50–59 (GAGSSSSGAG) has biased composition (low complexity). The span at 60–69 (TSAGGGGGGP) shows a compositional bias: gly residues. Residues 70-79 (SPSSSSPSLS) show a composition bias toward low complexity. The ALOG domain occupies 80–207 (RYESQKRRDW…ARGISYEKKK (128 aa)). The Nuclear localization signal motif lies at 205-209 (KKKRK). Low complexity-rich tracts occupy residues 212 to 224 (SSAG…SSEG) and 239 to 248 (TSASPQFIIP).

The protein belongs to the plant homeotic and developmental regulators ALOG protein family.

It localises to the nucleus. Functionally, probable transcription regulator that acts as a developmental regulator by promoting cell growth in response to light. The sequence is that of Protein G1-like6 from Oryza sativa subsp. indica (Rice).